A 79-amino-acid chain; its full sequence is UPF0154 protein SSP1415 (79 aa).

Residues 4 to 24 (WLAIVLIVLALILGLVGGFFL) form a helical membrane-spanning segment.

The protein belongs to the UPF0154 family.

It localises to the membrane. The chain is UPF0154 protein SSP1415 from Staphylococcus saprophyticus subsp. saprophyticus (strain ATCC 15305 / DSM 20229 / NCIMB 8711 / NCTC 7292 / S-41).